The sequence spans 304 residues: Cell surface-binding protein OPG105 (304 aa).

The region spanning 1 to 235 is the Alpha-carbonic anhydrase domain; it reads MPQQLSPINI…NDDTQVYYSG (235 aa). Residues 1–275 are Virion surface-facing; it reads MPQQLSPINI…YQKYIEGNKT (275 aa). The chain crosses the membrane as a helical span at residues 276–294; the sequence is FAIIAIVFVFILTAILFLM. At 295–304 the chain is on the intravirion side; it reads SRRYSREKQN.

This sequence belongs to the alpha-carbonic anhydrase family. Homodimer; disulfide-linked. Apparently non-glycosylated.

Its subcellular location is the virion membrane. In terms of biological role, binds to chondroitin sulfate on the cell surface to provide virion attachment to target cell. The polypeptide is Cell surface-binding protein OPG105 (OPG105) (Vaccinia virus (strain Copenhagen) (VACV)).